A 346-amino-acid polypeptide reads, in one-letter code: Phosphoribosylformylglycinamidine cyclo-ligase (346 aa).

This sequence belongs to the AIR synthase family.

It localises to the cytoplasm. The enzyme catalyses 2-formamido-N(1)-(5-O-phospho-beta-D-ribosyl)acetamidine + ATP = 5-amino-1-(5-phospho-beta-D-ribosyl)imidazole + ADP + phosphate + H(+). The protein operates within purine metabolism; IMP biosynthesis via de novo pathway; 5-amino-1-(5-phospho-D-ribosyl)imidazole from N(2)-formyl-N(1)-(5-phospho-D-ribosyl)glycinamide: step 2/2. The chain is Phosphoribosylformylglycinamidine cyclo-ligase from Colwellia psychrerythraea (strain 34H / ATCC BAA-681) (Vibrio psychroerythus).